Here is a 125-residue protein sequence, read N- to C-terminus: Glycine cleavage system H protein (125 aa).

Positions 19–101 (EVTVGITDHA…YHEGWLVKLK (83 aa)) constitute a Lipoyl-binding domain. An N6-lipoyllysine modification is found at Lys-60.

It belongs to the GcvH family. In terms of assembly, the glycine cleavage system is composed of four proteins: P, T, L and H. It depends on (R)-lipoate as a cofactor.

Its function is as follows. The glycine cleavage system catalyzes the degradation of glycine. The H protein shuttles the methylamine group of glycine from the P protein to the T protein. The sequence is that of Glycine cleavage system H protein from Legionella pneumophila (strain Corby).